Here is a 143-residue protein sequence, read N- to C-terminus: Large ribosomal subunit protein uL11 (143 aa).

Belongs to the universal ribosomal protein uL11 family. In terms of assembly, part of the ribosomal stalk of the 50S ribosomal subunit. Interacts with L10 and the large rRNA to form the base of the stalk. L10 forms an elongated spine to which L12 dimers bind in a sequential fashion forming a multimeric L10(L12)X complex. In terms of processing, one or more lysine residues are methylated.

Functionally, forms part of the ribosomal stalk which helps the ribosome interact with GTP-bound translation factors. The polypeptide is Large ribosomal subunit protein uL11 (Delftia acidovorans (strain DSM 14801 / SPH-1)).